A 57-amino-acid polypeptide reads, in one-letter code: Catalase-1 (57 aa).

Tyr-37 contacts heme.

In terms of assembly, homodimer. Heme serves as cofactor.

The catalysed reaction is 2 H2O2 = O2 + 2 H2O. In terms of biological role, decomposes hydrogen peroxide into water and oxygen; serves to protect cells from the toxic effects of hydrogen peroxide. The sequence is that of Catalase-1 from Comamonas terrigena.